We begin with the raw amino-acid sequence, 241 residues long: 2,3,4,5-tetrahydropyridine-2,6-dicarboxylate N-acetyltransferase (241 aa).

It belongs to the transferase hexapeptide repeat family. DapH subfamily.

The enzyme catalyses (S)-2,3,4,5-tetrahydrodipicolinate + acetyl-CoA + H2O = L-2-acetamido-6-oxoheptanedioate + CoA. The protein operates within amino-acid biosynthesis; L-lysine biosynthesis via DAP pathway; LL-2,6-diaminopimelate from (S)-tetrahydrodipicolinate (acetylase route): step 1/3. In terms of biological role, catalyzes the transfer of an acetyl group from acetyl-CoA to tetrahydrodipicolinate. This Thermoanaerobacter pseudethanolicus (strain ATCC 33223 / 39E) (Clostridium thermohydrosulfuricum) protein is 2,3,4,5-tetrahydropyridine-2,6-dicarboxylate N-acetyltransferase.